A 186-amino-acid chain; its full sequence is Small ribosomal subunit protein uS19 (186 aa).

Positions 1–95 are unknown; it reads MREAIKRYGS…YEELYAQYKQ (95 aa). Positions 96 to 186 are small ribosomal subunit protein uS19; the sequence is MTEKKAYVDP…EKTAKVVKKK (91 aa).

This sequence belongs to the universal ribosomal protein uS19 family.

Functionally, protein S19 forms a complex with S13 that binds strongly to the 16S ribosomal RNA. This Aquifex aeolicus (strain VF5) protein is Small ribosomal subunit protein uS19.